The following is a 253-amino-acid chain: Adapter protein MecA (253 aa).

Belongs to the MecA family. As to quaternary structure, homodimer.

In terms of biological role, enables the recognition and targeting of unfolded and aggregated proteins to the ClpC protease or to other proteins involved in proteolysis. The chain is Adapter protein MecA from Streptococcus pyogenes serotype M6 (strain ATCC BAA-946 / MGAS10394).